Reading from the N-terminus, the 367-residue chain is Voltage-gated potassium channel subunit beta-2 (367 aa).

Thr56, Trp57, Gln63, and Asp85 together coordinate NADP(+). The active-site Proton donor/acceptor is Tyr90. The NADP(+) site is built by Asn158, Ser188, Arg189, Gln214, Trp243, Ser244, Pro245, Leu246, Ala247, Cys248, Lys254, Tyr262, Arg264, Gly323, Ser325, Gln329, Glu332, and Asn333.

This sequence belongs to the shaker potassium channel beta subunit family. Forms heteromultimeric complex with alpha subunits.

It is found in the cytoplasm. The protein resides in the membrane. The protein localises to the cell membrane. It localises to the cell projection. Its subcellular location is the axon. It is found in the synapse. The protein resides in the synaptosome. The protein localises to the cytoskeleton. Functionally, regulatory subunit of the voltage-gated potassium (Kv) Shaker channels composed of pore-forming and potassium-conducting alpha subunits and of regulatory beta subunits. The beta-2/KCNAB2 cytoplasmic subunit may promote potassium channel closure via a mechanism that does not involve physical obstruction of the channel pore. Enhances current amplitude of Kv1.1/KCNA1 and Kv2.2/KCNA2 channels. May display nicotinamide adenine dinucleotide phosphate (NADPH)-dependent aldoketoreductase activity by catalyzing the NADPH-dependent reduction of a wide range of aldehyde and ketone substrates. The binding of oxidized and reduced nucleotide may alter Kv channel gating and contribute to dynamic fine tuning of cell excitability. The protein is Voltage-gated potassium channel subunit beta-2 (kcnab2) of Xenopus laevis (African clawed frog).